The sequence spans 494 residues: Aspartyl/glutamyl-tRNA(Asn/Gln) amidotransferase subunit B (494 aa).

The protein belongs to the GatB/GatE family. GatB subfamily. In terms of assembly, heterotrimer of A, B and C subunits.

The catalysed reaction is L-glutamyl-tRNA(Gln) + L-glutamine + ATP + H2O = L-glutaminyl-tRNA(Gln) + L-glutamate + ADP + phosphate + H(+). It carries out the reaction L-aspartyl-tRNA(Asn) + L-glutamine + ATP + H2O = L-asparaginyl-tRNA(Asn) + L-glutamate + ADP + phosphate + 2 H(+). Its function is as follows. Allows the formation of correctly charged Asn-tRNA(Asn) or Gln-tRNA(Gln) through the transamidation of misacylated Asp-tRNA(Asn) or Glu-tRNA(Gln) in organisms which lack either or both of asparaginyl-tRNA or glutaminyl-tRNA synthetases. The reaction takes place in the presence of glutamine and ATP through an activated phospho-Asp-tRNA(Asn) or phospho-Glu-tRNA(Gln). The protein is Aspartyl/glutamyl-tRNA(Asn/Gln) amidotransferase subunit B of Rhodopseudomonas palustris (strain BisB5).